Reading from the N-terminus, the 662-residue chain is Polyunsaturated fatty acid lipoxygenase ALOX15 (662 aa).

The PLAT domain occupies 2–114 (GLYRIRVSTG…VLSLPEGTGR (113 aa)). Residues 115–662 (TVGEDPQGLF…PSVVENSVAI (548 aa)) enclose the Lipoxygenase domain. Positions 360, 365, 540, 544, and 662 each coordinate Fe cation.

Belongs to the lipoxygenase family. Interacts with PEBP1; in response to IL13/interleukin-13, prevents the interaction of PEBP1 with RAF1 to activate the ERK signaling cascade. Requires Fe cation as cofactor. Detected in monocytes and eosinophils (at protein level). Expressed in airway epithelial cells.

It is found in the cytoplasm. It localises to the cytosol. The protein localises to the cell membrane. The protein resides in the lipid droplet. The catalysed reaction is (5Z,8Z,11Z,14Z)-eicosatetraenoate + O2 = (12S)-hydroperoxy-(5Z,8Z,10E,14Z)-eicosatetraenoate. The enzyme catalyses (5Z,8Z,11Z,14Z)-eicosatetraenoate + O2 = (15S)-hydroperoxy-(5Z,8Z,11Z,13E)-eicosatetraenoate. It catalyses the reaction (9Z,12Z)-octadecadienoate + O2 = (13S)-hydroperoxy-(9Z,11E)-octadecadienoate. It carries out the reaction (5Z,8Z,11Z,14Z)-eicosatetraenoate + 2 O2 = (14R,15S)-dihydroperoxy-(5Z,8Z,10E,12E)-eicosatetraenoate. The catalysed reaction is (5Z,8Z,11Z,14Z)-eicosatetraenoate + 2 O2 = (8S,15S)-dihydroperoxy-(5Z,9E,11Z,13E)-eicosatetraenoate. The enzyme catalyses (14S,15R)-epoxy-(5Z,8Z,11Z)-eicosatrienoate + O2 = (8S)-hydroperoxy-(14S,15R)-epoxy-(5Z,9E,11Z)-eicosatrienoate. It catalyses the reaction (14S,15R)-epoxy-(5Z,8Z,11Z)-eicosatrienoate + O2 = (12S)-hydroperoxy-(14S,15R)-epoxy-(5Z,8Z,10E)-eicosatrienoate. It carries out the reaction (14R,15S)-epoxy-(5Z,8Z,11Z)-eicosatrienoate + O2 = (5S)-hydroperoxy-(14R,15S)-epoxy-(6E,8Z,11Z)-eicosatrienoate. The catalysed reaction is (14R,15S)-epoxy-(5Z,8Z,11Z)-eicosatrienoate + O2 = (12S)-hydroperoxy-(14R,15S)-epoxy-(5Z,8Z,10E)-eicosatrienoate. The enzyme catalyses (15R)-hydroperoxy-(5Z,8Z,11Z,13E)-eicosatetraenoate = 15-oxo-(5Z,8Z,11Z,13E)-eicosatetraenoate + H2O. It catalyses the reaction (15S)-hydroperoxy-(5Z,8Z,11Z,13E)-eicosatetraenoate = (14S,15S)-epoxy-(5Z,8Z,10E,12E)-eicosatetraenoate + H2O. It carries out the reaction (12S)-hydroperoxy-(5Z,8Z,10E,14Z)-eicosatetraenoate = (8S)-hydroxy-(11S,12S)-epoxy-(5Z,9E,14Z)-eicosatrienoate. The catalysed reaction is (4Z,7Z,10Z,13Z,16Z,19Z)-docosahexaenoate + O2 = (14S)-hydroperoxy-(4Z,7Z,10Z,12E,16Z,19Z)-docosahexaenoate. The enzyme catalyses (4Z,7Z,10Z,13Z,16Z,19Z)-docosahexaenoate + O2 = (17S)-hydroperoxy-(4Z,7Z,10Z,13Z,15E,19Z)-docosahexaenoate. It catalyses the reaction (7S)-hydroperoxy-(4Z,8E,10Z,13Z,16Z,19Z)-docosahexaenoate + O2 = (7S,14S)-dihydroperoxy-(4Z,8E,10Z,12E,16Z,19Z)-docosahexaenoate. It carries out the reaction (7S)-hydroperoxy-(4Z,8E,10Z,13Z,16Z,19Z)-docosahexaenoate + O2 = (7S,17S)-dihydroperoxy-(4Z,8E,10Z,13Z,15E,19Z)-docosahexaenoate. The catalysed reaction is (4Z,7Z,10Z,13Z,16Z,19Z)-docosahexaenoate + O2 = (11S)-hydroperoxy-(4Z,7Z,9E,13Z,16Z,19Z)-docosahexaenoate. The enzyme catalyses (7Z,10Z,13Z,16Z,19Z)-docosapentaenoate + O2 = 14-hydroperoxy-(7Z,10Z,12E,16Z,19Z)-docosapentaenoate. It catalyses the reaction (4Z,7Z,10Z,13Z,16Z)-docosapentaenoate + O2 = 14-hydroperoxy-(4Z,7Z,10Z,12E,16Z)-docosapentaenoate. It carries out the reaction N-(5Z,8Z,11Z,14Z)-eicosatetraenoyl-taurine + O2 = N-(12S)-hydroperoxy-(5Z,8Z,10E,14Z)-eicosatetraenoyl-taurine. The catalysed reaction is N-(5Z,8Z,11Z,14Z)-eicosatetraenoyl-gamma-aminobutanoate + O2 = N-(12S)-hydroperoxy-(5Z,8Z,10E,14Z)-eicosatetraenoyl-gamma-aminobutanoate. The enzyme catalyses N-(5Z,8Z,11Z,14Z)-eicosatetraenoyl-glycine + O2 = N-(12S)-hydroperoxy-(5Z,8Z,10E,14Z)-eicosatetraenoyl-glycine. It catalyses the reaction N-(5Z,8Z,11Z,14Z)-eicosatetraenoyl-L-alanine + O2 = N-(12S)-hydroperoxy-(5Z,8Z,10E,14Z)-eicosatetraenoyl-alanine. It carries out the reaction N-(5Z,8Z,11Z,14Z)-eicosatetraenoyl-taurine + O2 = N-(15S)-hydroperoxy-(5Z,8Z,11Z,13E)-eicosatetraenoyl-taurine. The catalysed reaction is N-(5Z,8Z,11Z,14Z)-eicosatetraenoyl-gamma-aminobutanoate + O2 = N-(15S)-hydroperoxy-(5Z,8Z,11Z,13E)-eicosatetraenoyl-gamma-aminobutanoate. The enzyme catalyses N-(5Z,8Z,11Z,14Z)-eicosatetraenoyl-glycine + O2 = N-(15S)-hydroperoxy-(5Z,8Z,11Z,13E)-eicosatetraenoyl-glycine. It catalyses the reaction N-(5Z,8Z,11Z,14Z)-eicosatetraenoyl-L-alanine + O2 = N-(15S)-hydroperoxy-(5Z,8Z,11Z,13E)-eicosatetraenoyl-alanine. It participates in lipid metabolism; hydroperoxy eicosatetraenoic acid biosynthesis. Its activity is regulated as follows. Activity is increased by binding phosphatidylinositol phosphates, especially phosphatidylinositol 3,4-bisphosphate and phosphatidylinositol 4,5-bisphosphate. Inactivated at 37 degrees Celsius by (13S)-hydroperoxy-(9Z,11E)-octadecadienoate. Its function is as follows. Non-heme iron-containing dioxygenase that catalyzes the stereo-specific peroxidation of free and esterified polyunsaturated fatty acids generating a spectrum of bioactive lipid mediators. It inserts peroxyl groups at C12 or C15 of arachidonate ((5Z,8Z,11Z,14Z)-eicosatetraenoate) producing both 12-hydroperoxyeicosatetraenoate/12-HPETE and 15-hydroperoxyeicosatetraenoate/15-HPETE. It may then act on 12-HPETE to produce hepoxilins, which may show pro-inflammatory properties. Can also peroxidize linoleate ((9Z,12Z)-octadecadienoate) to 13-hydroperoxyoctadecadienoate/13-HPODE. May participate in the sequential oxidations of DHA ((4Z,7Z,10Z,13Z,16Z,19Z)-docosahexaenoate) to generate specialized pro-resolving mediators (SPMs)like resolvin D5 ((7S,17S)-diHPDHA) and (7S,14S)-diHPDHA, that actively down-regulate the immune response and have anti-aggregation properties with platelets. Can convert epoxy fatty acids to hydroperoxy-epoxides derivatives followed by an intramolecular nucleophilic substitution leading to the formation of monocyclic endoperoxides. Plays an important role during the maintenance of self-tolerance by peroxidizing membrane-bound phosphatidylethanolamine which can then signal the sorting process for clearance of apoptotic cells during inflammation and prevent an autoimmune response. In addition to its role in the immune and inflammatory responses, this enzyme may play a role in epithelial wound healing in the cornea through production of lipoxin A4 (LXA(4)) and docosahexaenoic acid-derived neuroprotectin D1 (NPD1; 10R,17S-HDHA), both lipid autacoids exhibit anti-inflammatory and neuroprotective properties. Furthermore, it may regulate actin polymerization which is crucial for several biological processes such as the phagocytosis of apoptotic cells. It is also implicated in the generation of endogenous ligands for peroxisome proliferator activated receptor (PPAR-gamma), hence modulating macrophage development and function. It may also exert a negative effect on skeletal development by regulating bone mass through this pathway. As well as participates in ER stress and downstream inflammation in adipocytes, pancreatic islets, and liver. Finally, it is also involved in the cellular response to IL13/interleukin-13. This is Polyunsaturated fatty acid lipoxygenase ALOX15 from Homo sapiens (Human).